We begin with the raw amino-acid sequence, 629 residues long: Transferrin (629 aa).

The signal sequence occupies residues 1 to 21 (MTIKNVLKLAALLGVLALVQA). Transferrin-like domains lie at 26 to 366 (YRMC…ERDG) and 372 to 621 (MKMC…GLKC). 2 disulfide bridges follow: C29-C63 and C38-C54. Y111 is a binding site for Fe(3+). Intrachain disulfides connect C135–C231, C184–C210, C207–C216, C270–C283, C375–C409, and C385–C403. Hydrogencarbonate is bound by residues T137, R141, V143, and G144. Residue Y225 participates in Fe(3+) binding. Positions 408 and 561 each coordinate Fe(3+).

Belongs to the transferrin family. As to quaternary structure, monomer.

In terms of biological role, transferrins are iron binding transport proteins which bind Fe(3+) ion in association with the binding of an anion, usually bicarbonate. This transferrin binds only one Fe(3+) ion per protein molecule. Transports iron ions from the hemolymph into the eggs during the vitellogenic stage (oogenesis). In Sarcophaga peregrina (Flesh fly), this protein is Transferrin.